The primary structure comprises 173 residues: Translation initiation factor IF-3 (173 aa).

This sequence belongs to the IF-3 family. Monomer.

It is found in the cytoplasm. IF-3 binds to the 30S ribosomal subunit and shifts the equilibrium between 70S ribosomes and their 50S and 30S subunits in favor of the free subunits, thus enhancing the availability of 30S subunits on which protein synthesis initiation begins. The chain is Translation initiation factor IF-3 from Methylobacterium sp. (strain 4-46).